We begin with the raw amino-acid sequence, 508 residues long: Steroid 17-alpha-hydroxylase/17,20 lyase (508 aa).

Position 202 (Asn202) interacts with substrate. Heme is bound at residue Cys442.

It belongs to the cytochrome P450 family. Heme serves as cofactor.

It is found in the endoplasmic reticulum membrane. Its subcellular location is the microsome membrane. It catalyses the reaction a C21-steroid + reduced [NADPH--hemoprotein reductase] + O2 = a 17alpha-hydroxy-C21-steroid + oxidized [NADPH--hemoprotein reductase] + H2O + H(+). The catalysed reaction is progesterone + reduced [NADPH--hemoprotein reductase] + O2 = 17alpha-hydroxyprogesterone + oxidized [NADPH--hemoprotein reductase] + H2O + H(+). It carries out the reaction pregnenolone + reduced [NADPH--hemoprotein reductase] + O2 = 17alpha-hydroxypregnenolone + oxidized [NADPH--hemoprotein reductase] + H2O + H(+). The enzyme catalyses 17alpha-hydroxypregnenolone + reduced [NADPH--hemoprotein reductase] + O2 = 3beta-hydroxyandrost-5-en-17-one + acetate + oxidized [NADPH--hemoprotein reductase] + H2O + 2 H(+). The protein operates within steroid hormone biosynthesis. It participates in steroid biosynthesis; glucocorticoid biosynthesis. Regulated predominantly by intracellular cAMP levels. The 17,20-lyase activity is stimulated by cytochrome b5, which acts as an allosteric effector increasing the Vmax of the lyase activity. Its function is as follows. A cytochrome P450 monooxygenase involved in corticoid and androgen biosynthesis. Catalyzes 17-alpha hydroxylation of C21 steroids, which is common for both pathways. A second oxidative step, required only for androgen synthesis, involves an acyl-carbon cleavage. Hydroxylates pregnenolone to form 17-alpha pregnenolone, followed by the cleavage of the C17-C20 bond to form dehydroepiandrosterone (DHEA). Has 17-alpha hydroxylase activity toward progesterone. The 17-alpha hydroxy intermediates, as part of adrenal glucocorticoids biosynthesis pathway, are precursors of cortisol. Mechanistically, uses molecular oxygen inserting one oxygen atom into a substrate, and reducing the second into a water molecule, with two electrons provided by NADPH via cytochrome P450 reductase (CPR; NADPH-ferrihemoprotein reductase). The chain is Steroid 17-alpha-hydroxylase/17,20 lyase (CYP17A1) from Papio hamadryas ursinus (Chacma baboon).